The primary structure comprises 359 residues: MRNRFGSLFSLTTWGESHGPCLGVVIDGCPAGLQLSPEDFVPAMSRRCPGRPGTSPRKEADTVHILSGIYQGKTTGTPIALQIFNTDVNSDPYREQDDRYRPGHGQFAYEKKYGIVDPLGGGRSSGRETACRVAAGVIAAKFLAHYDIHCLAFLSKLGQVSIEEYPKYSKEFAQSIYNSPFLSPLNHDAIFQIITDLQNTQDSLGGVVSFITSPIHESLGEPVFSKVQAMLASALMSIPAAKGFEIGLGFASADRYGSEYIDPIIIEDGRISMRSNNCGGSLGGITIGMPLNGRVVFKPTSSIHKPCGTVTKTGEPTSYVTQKGSRHDPCVTIRAVGVVEAMVNLVLADLLLQQRCARL.

NADP(+) is bound at residue R47. FMN-binding positions include 123–125, G283, 298–302, and R326; these read RSS and KPTSS.

Belongs to the chorismate synthase family. Homotetramer. FMNH2 is required as a cofactor.

The enzyme catalyses 5-O-(1-carboxyvinyl)-3-phosphoshikimate = chorismate + phosphate. The protein operates within metabolic intermediate biosynthesis; chorismate biosynthesis; chorismate from D-erythrose 4-phosphate and phosphoenolpyruvate: step 7/7. Its function is as follows. Catalyzes the anti-1,4-elimination of the C-3 phosphate and the C-6 proR hydrogen from 5-enolpyruvylshikimate-3-phosphate (EPSP) to yield chorismate, which is the branch point compound that serves as the starting substrate for the three terminal pathways of aromatic amino acid biosynthesis. This reaction introduces a second double bond into the aromatic ring system. The chain is Chorismate synthase from Chlamydia abortus (strain DSM 27085 / S26/3) (Chlamydophila abortus).